The sequence spans 71 residues: EAGEECDCGSPGNPCCDAATCKLRQGAQCAEGLCCDQCRFMKKGTVCRIARGDDMDDYCNGISAGCPRNPF.

Residues 1-71 (EAGEECDCGS…ISAGCPRNPF (71 aa)) enclose the Disintegrin domain. 6 cysteine pairs are disulfide-bonded: cysteine 6/cysteine 21, cysteine 8/cysteine 16, cysteine 15/cysteine 38, cysteine 29/cysteine 35, cysteine 34/cysteine 59, and cysteine 47/cysteine 66. Residues 51–53 (RGD) carry the Cell attachment site motif.

The protein belongs to the venom metalloproteinase (M12B) family. P-II subfamily. P-IIa sub-subfamily. As to quaternary structure, monomer. In terms of tissue distribution, expressed by the venom gland.

Its subcellular location is the secreted. Its function is as follows. Inhibits fibrinogen interaction with platelets. Acts by binding to alpha-IIb/beta-3 (ITGA2B/ITGB3) on the platelet surface and inhibits aggregation induced by ADP, thrombin, platelet-activating factor and collagen. This Gloydius blomhoffii (Mamushi) protein is Disintegrin halysin.